The sequence spans 132 residues: Fatty acid-binding protein, liver (132 aa).

N-acetylvaline is present on valine 1. Tyrosine 19 bears the Phosphotyrosine; by Tyr-kinases mark.

The protein belongs to the calycin superfamily. Fatty-acid binding protein (FABP) family.

It is found in the cytoplasm. Functionally, FABPs are thought to play a role in the intracellular transport of long-chain fatty acids and their acyl-CoA esters. This is Fatty acid-binding protein, liver from Ginglymostoma cirratum (Nurse shark).